The sequence spans 1527 residues: Peroxidasin (1527 aa).

The signal sequence occupies residues 1–23; the sequence is MRFMLLMLQLLGLLLLLAGGVQS. In terms of domain architecture, LRRNT spans 24 to 53; that stretch reads VYCPAGCTCLERTVRCIRAKLSAVPKLPQD. LRR repeat units follow at residues 51 to 74, 75 to 98, 99 to 122, 124 to 146, 147 to 170, and 172 to 196; these read PQDT…AFSG, LAQL…ALNG, LTAL…IFQR, PRLE…LFDN, LPRL…GFNR, and NNLK…LWRR. 4 Ig-like C2-type domains span residues 236 to 322, 365 to 453, 458 to 545, and 553 to 643; these read PQFL…QPVR, PHFT…ARIE, PEIL…ATIK, and PQLA…ALVT. 4 cysteine pairs are disulfide-bonded: Cys257–Cys307, Cys388–Cys437, Cys479–Cys529, and Cys574–Cys627. N-linked (GlcNAc...) asparagine glycosylation occurs at Asn419. N-linked (GlcNAc...) asparagine glycosylation is found at Asn616, Asn673, Asn682, Asn731, and Asn767. Residues Cys768 and Cys784 are joined by a disulfide bond. Residue Asp862 coordinates heme b. His863 (proton acceptor) is an active-site residue. Residue Asp864 coordinates Ca(2+). Intrachain disulfides connect Cys882-Cys892 and Cys886-Cys909. Ca(2+)-binding residues include Thr941, Tyr943, Asp945, and Ser947. An N-linked (GlcNAc...) asparagine glycan is attached at Asn962. Cys994 and Cys1005 are joined by a disulfide. Positions 1015 and 1109 each coordinate heme b. Residues Asn1120 and Asn1213 are each glycosylated (N-linked (GlcNAc...) asparagine). Cystine bridges form between Cys1212-Cys1269 and Cys1310-Cys1336. Residues 1403 to 1441 are a coiled coil; it reads NEERVSGLEELIGSFQKELKKLHKKLRKLEDSCNSADSE. One can recognise a VWFC domain in the interval 1463-1524; sequence SHCVDDKGTT…PPEACCPHCP (62 aa).

It belongs to the peroxidase family. XPO subfamily. As to quaternary structure, homotrimer; disulfide-linked. Requires Ca(2+) as cofactor. It depends on heme b as a cofactor. In terms of tissue distribution, expressed in hemocytes. Also expressed in the fat body and gastric caeca.

It localises to the secreted. The enzyme catalyses (5R)-5-hydroxy-L-lysyl-[collagen] + L-methionyl-[collagen] + H2O2 = [collagen]-(5R)-5-hydroxy-L-lysyl-N-S-L-methionyl-[collagen] + 2 H2O + H(+). It carries out the reaction bromide + H2O2 = hypobromite + H2O. The catalysed reaction is (5R)-5-hydroxy-L-lysyl-[collagen] + L-methionyl-[collagen] + hypobromite = [collagen]-(5R)-5-hydroxy-L-lysyl-N-S-L-methionyl-[collagen] + bromide + H2O + H(+). It catalyses the reaction L-lysyl-[collagen] + L-methionyl-[collagen] + H2O2 = [collagen]-L-lysyl-N-S-L-methionyl-[collagen] + 2 H2O + H(+). The enzyme catalyses L-lysyl-[collagen] + L-methionyl-[collagen] + hypobromite = [collagen]-L-lysyl-N-S-L-methionyl-[collagen] + bromide + H2O + H(+). It carries out the reaction L-tyrosyl-[protein] + bromide + H2O2 + H(+) = 3-bromo-L-tyrosyl-[protein] + 2 H2O. The catalysed reaction is hypobromite + L-tyrosyl-[protein] + H(+) = 3-bromo-L-tyrosyl-[protein] + H2O. Its function is as follows. Catalyzes the two-electron oxidation of bromide by hydrogen peroxide and generates hypobromite as a reactive intermediate which mediates the formation of sulfilimine cross-links between methionine and hydroxylysine residues within an uncross-linked collagen IV NC1 hexamer. Plays a role in extracellular matrix consolidation, phagocytosis and defense. The polypeptide is Peroxidasin (Drosophila melanogaster (Fruit fly)).